The sequence spans 299 residues: MESIIEKAEILLEALPFIRNFRGKTFVIKYGGNAMDKADLRDAFAQDIIMLKYIGINPVIVHGGGPQIGQYLKKMGLESKFVGGLRVTDKETMDIVEMVLGGLVNKSIVQLINSYSGGHVKAVGITGKDGCLIKAKKLDAEEYFRSIGDYRPTELLDLGHVGEVEEVNPELLIHLDEDNYIPVIAPIGFDAEGNAYNINADFVAAAIAGALKAEKVLFLTDIEGLKDENGNTLSSATVSQINQMIKDGVIKGGMIPKVKACIQALEKGVNKAHILDGRLPHCILLEIFTKKGVGTEITL.

Substrate is bound by residues 64–65, Arg86, and Asn197; that span reads GG.

It belongs to the acetylglutamate kinase family. ArgB subfamily.

The protein resides in the cytoplasm. The enzyme catalyses N-acetyl-L-glutamate + ATP = N-acetyl-L-glutamyl 5-phosphate + ADP. The protein operates within amino-acid biosynthesis; L-arginine biosynthesis; N(2)-acetyl-L-ornithine from L-glutamate: step 2/4. In terms of biological role, catalyzes the ATP-dependent phosphorylation of N-acetyl-L-glutamate. This Sulfurihydrogenibium sp. (strain YO3AOP1) protein is Acetylglutamate kinase.